Consider the following 518-residue polypeptide: GMP synthase [glutamine-hydrolyzing] (518 aa).

The region spanning 13–203 is the Glutamine amidotransferase type-1 domain; that stretch reads KIIVLDFGSQ…ALNVCGCKGD (191 aa). Residue cysteine 90 is the Nucleophile of the active site. Active-site residues include histidine 177 and glutamate 179. The 190-residue stretch at 204–393 folds into the GMPS ATP-PPase domain; it reads WTMENFSEVE…LGMPDAIVWR (190 aa). ATP is bound at residue 231–237; sequence SGGVDSS.

As to quaternary structure, homodimer.

It carries out the reaction XMP + L-glutamine + ATP + H2O = GMP + L-glutamate + AMP + diphosphate + 2 H(+). Its pathway is purine metabolism; GMP biosynthesis; GMP from XMP (L-Gln route): step 1/1. In terms of biological role, catalyzes the synthesis of GMP from XMP. This is GMP synthase [glutamine-hydrolyzing] from Listeria welshimeri serovar 6b (strain ATCC 35897 / DSM 20650 / CCUG 15529 / CIP 8149 / NCTC 11857 / SLCC 5334 / V8).